A 396-amino-acid polypeptide reads, in one-letter code: Elongation factor Tu (396 aa).

In terms of domain architecture, tr-type G spans 10 to 206; the sequence is KPHINVGTIG…QMDAYIPEPQ (197 aa). The tract at residues 19 to 26 is G1; sequence GHVDHGKT. Residue 19–26 participates in GTP binding; sequence GHVDHGKT. Thr-26 contributes to the Mg(2+) binding site. The interval 60–64 is G2; sequence GITIA. The G3 stretch occupies residues 81–84; sequence DCPG. Residues 81–85 and 136–139 contribute to the GTP site; these read DCPGH and NKAD. Residues 136-139 are G4; it reads NKAD. The segment at 174–176 is G5; that stretch reads SAL.

Belongs to the TRAFAC class translation factor GTPase superfamily. Classic translation factor GTPase family. EF-Tu/EF-1A subfamily. As to quaternary structure, monomer.

It localises to the cytoplasm. The catalysed reaction is GTP + H2O = GDP + phosphate + H(+). Functionally, GTP hydrolase that promotes the GTP-dependent binding of aminoacyl-tRNA to the A-site of ribosomes during protein biosynthesis. The protein is Elongation factor Tu of Nitrosococcus oceani (strain ATCC 19707 / BCRC 17464 / JCM 30415 / NCIMB 11848 / C-107).